A 120-amino-acid polypeptide reads, in one-letter code: NAD(P)H-quinone oxidoreductase subunit 3, chloroplastic (120 aa).

Transmembrane regions (helical) follow at residues 9-29 (IFWT…WISG), 64-84 (MFAL…PWAM), and 88-108 (VLGV…VVGL).

Belongs to the complex I subunit 3 family. In terms of assembly, NDH is composed of at least 16 different subunits, 5 of which are encoded in the nucleus.

The protein resides in the plastid. The protein localises to the chloroplast thylakoid membrane. The enzyme catalyses a plastoquinone + NADH + (n+1) H(+)(in) = a plastoquinol + NAD(+) + n H(+)(out). It carries out the reaction a plastoquinone + NADPH + (n+1) H(+)(in) = a plastoquinol + NADP(+) + n H(+)(out). Functionally, NDH shuttles electrons from NAD(P)H:plastoquinone, via FMN and iron-sulfur (Fe-S) centers, to quinones in the photosynthetic chain and possibly in a chloroplast respiratory chain. The immediate electron acceptor for the enzyme in this species is believed to be plastoquinone. Couples the redox reaction to proton translocation, and thus conserves the redox energy in a proton gradient. This is NAD(P)H-quinone oxidoreductase subunit 3, chloroplastic from Brachypodium distachyon (Purple false brome).